The following is a 107-amino-acid chain: Pre-mRNA-splicing factor RDS3 (107 aa).

The protein belongs to the PHF5 family. As to quaternary structure, component of the spliceosome where it interacts with CUS1, HSH49, HSH155, IST3 and RSE1. Also interacts with YRA1.

The protein resides in the nucleus. Required for pre-mRNA splicing. Involved in regulation of drug sensitivity and may play a role in multidrug resistance. This chain is Pre-mRNA-splicing factor RDS3 (RDS3), found in Saccharomyces cerevisiae (strain ATCC 204508 / S288c) (Baker's yeast).